A 305-amino-acid polypeptide reads, in one-letter code: MSKKLTFQEIILTLQQFWNDKGCMLMQAYDNEKGAGTMSPYTFLRAIGPEPWNAAYVEPSRRPADGRYGENPNRLYQHHQFQVVMKPSPSNIQELYLESLEKLGINPLEHDIRFVEDNWENPSTGSAGLGWEVWLDGMEITQFTYFQQVGGLATQPVTSEVTYGLERLASYIQEVDSVYDIEWSPGVKYGEIFLQPEYEHSKYSFEISDQVMLLENFEKFEKEASRALEEGLVHPAYDYVLKCSHTFNLLDARGAVSVTERAGYIARIRNLARLVAKTFVAERRKLGYPLLDEATRVELLKEETE.

Belongs to the class-II aminoacyl-tRNA synthetase family. In terms of assembly, tetramer of two alpha and two beta subunits.

The protein localises to the cytoplasm. The catalysed reaction is tRNA(Gly) + glycine + ATP = glycyl-tRNA(Gly) + AMP + diphosphate. In Streptococcus uberis (strain ATCC BAA-854 / 0140J), this protein is Glycine--tRNA ligase alpha subunit.